We begin with the raw amino-acid sequence, 397 residues long: Argininosuccinate synthase (397 aa).

9-17 (AYSGGLDTS) lines the ATP pocket. Tyrosine 85 lines the L-citrulline pocket. Glycine 115 is a binding site for ATP. L-aspartate-binding residues include threonine 117, asparagine 121, and aspartate 122. Asparagine 121 contacts L-citrulline. The L-citrulline site is built by arginine 125, serine 173, glutamate 258, and tyrosine 270.

The protein belongs to the argininosuccinate synthase family. Type 1 subfamily. In terms of assembly, homotetramer.

The protein resides in the cytoplasm. It catalyses the reaction L-citrulline + L-aspartate + ATP = 2-(N(omega)-L-arginino)succinate + AMP + diphosphate + H(+). Its pathway is amino-acid biosynthesis; L-arginine biosynthesis; L-arginine from L-ornithine and carbamoyl phosphate: step 2/3. In Streptococcus suis (strain 05ZYH33), this protein is Argininosuccinate synthase.